Reading from the N-terminus, the 466-residue chain is Cysteine--tRNA ligase (466 aa).

Cys29 provides a ligand contact to Zn(2+). A 'HIGH' region motif is present at residues 31-41; sequence PTVYNYIHIGN. Positions 209, 234, and 238 each coordinate Zn(2+). A 'KMSKS' region motif is present at residues 266–270; it reads KMSKS. Lys269 contributes to the ATP binding site. Ser270 bears the Phosphoserine mark.

The protein belongs to the class-I aminoacyl-tRNA synthetase family. Monomer. Zn(2+) is required as a cofactor.

The protein localises to the cytoplasm. It carries out the reaction tRNA(Cys) + L-cysteine + ATP = L-cysteinyl-tRNA(Cys) + AMP + diphosphate. The protein is Cysteine--tRNA ligase (cysS) of Halalkalibacterium halodurans (strain ATCC BAA-125 / DSM 18197 / FERM 7344 / JCM 9153 / C-125) (Bacillus halodurans).